Here is a 273-residue protein sequence, read N- to C-terminus: Zinc finger protein 80 (273 aa).

2 consecutive C2H2-type zinc fingers follow at residues 49 to 71 (YKCK…HQIH) and 77 to 99 (YECQ…MRIH). The C2H2-type 3; atypical zinc finger occupies 105 to 127 (CKCVECGKVFNRRSHLLCYRQIH). 4 C2H2-type zinc fingers span residues 133–155 (YECS…RMTH), 161–183 (FGCK…MKIH), 189–211 (YKCG…SMTH), and 217–239 (YECK…TRSH).

It belongs to the krueppel C2H2-type zinc-finger protein family.

The protein localises to the nucleus. Functionally, may be involved in transcriptional regulation. This chain is Zinc finger protein 80 (ZNF80), found in Gorilla gorilla gorilla (Western lowland gorilla).